The sequence spans 122 residues: Large ribosomal subunit protein uL18 (122 aa).

A compositionally biased stretch (basic residues) spans 1–21; it reads MSKLSRKQQTQKRHRRLRRHL. A disordered region spans residues 1–26; sequence MSKLSRKQQTQKRHRRLRRHLTGTSD.

It belongs to the universal ribosomal protein uL18 family. In terms of assembly, part of the 50S ribosomal subunit; part of the 5S rRNA/L5/L18/L25 subcomplex. Contacts the 5S and 23S rRNAs.

Its function is as follows. This is one of the proteins that bind and probably mediate the attachment of the 5S RNA into the large ribosomal subunit, where it forms part of the central protuberance. The polypeptide is Large ribosomal subunit protein uL18 (Parasynechococcus marenigrum (strain WH8102)).